A 58-amino-acid polypeptide reads, in one-letter code: UPF0391 membrane protein Maqu_2901 (58 aa).

Helical transmembrane passes span 4 to 24 (WAIV…GGIA) and 28 to 48 (AGFA…SLVV).

It belongs to the UPF0391 family.

The protein localises to the cell membrane. This is UPF0391 membrane protein Maqu_2901 from Marinobacter nauticus (strain ATCC 700491 / DSM 11845 / VT8) (Marinobacter aquaeolei).